Consider the following 395-residue polypeptide: MAWRHLKKRAQDAVIILGGGGLLFASYLMATGDERFYAEHLMPTLQGLLDPESAHRLAVRFTSLGLLPRARFQDSDMLEVRVLGHKFRNPVGIAAGFDKHGEAVDGLYKMGFGFVEIGSVTPKPQEGNPRPRVFRLPEDQAVINRYGFNSHGLSVVEHRLRARQQKQAKLTEDGLPLGVNLGKNKTSVDAAEDYAEGVRVLGPLADYLVVNVSSPNTAGLRSLQGKAELRRLLTKVLQERDGLRRVHRPAVLVKIAPDLTSQDKEDIASVVKELGIDGLIVTNTTVSRPAGLQGALRSETGGLSGKPLRDLSTQTIREMYALTQGRVPIIGVGGVSSGQDALEKIRAGASLVQLYTALTFWGPPVVGKVKRELEALLKEQGFGGVTDAIGADHRR.

A mitochondrion; not cleaved-targeting transit peptide spans 1-10 (MAWRHLKKRA). The Mitochondrial matrix portion of the chain corresponds to 1 to 10 (MAWRHLKKRA). The chain crosses the membrane as a helical span at residues 11–30 (QDAVIILGGGGLLFASYLMA). Residues 31-395 (TGDERFYAEH…TDAIGADHRR (365 aa)) lie on the Mitochondrial intermembrane side of the membrane. FMN contacts are provided by residues 95 to 99 (AGFDK) and Ser119. Lys99 is a binding site for substrate. 144 to 148 (NRYGF) is a binding site for substrate. The FMN site is built by Asn180 and Asn211. 211–216 (NVSSPN) is a binding site for substrate. The Nucleophile role is filled by Ser214. FMN is bound by residues Lys254 and Thr282. 283–284 (NT) lines the substrate pocket. FMN-binding positions include Gly305, Gly334, and 355–356 (YT).

It belongs to the dihydroorotate dehydrogenase family. Type 2 subfamily. In terms of assembly, monomer. It depends on FMN as a cofactor. In terms of processing, the uncleaved transit peptide is required for mitochondrial targeting and proper membrane integration.

It is found in the mitochondrion inner membrane. The catalysed reaction is (S)-dihydroorotate + a quinone = orotate + a quinol. It participates in pyrimidine metabolism; UMP biosynthesis via de novo pathway; orotate from (S)-dihydroorotate (quinone route): step 1/1. Its function is as follows. Catalyzes the conversion of dihydroorotate to orotate with quinone as electron acceptor. Required for UMP biosynthesis via de novo pathway. This is Dihydroorotate dehydrogenase (quinone), mitochondrial (DHODH) from Homo sapiens (Human).